The chain runs to 306 residues: Ankyrin repeat domain-containing protein 23 (306 aa).

Residues glutamine 41–lysine 90 adopt a coiled-coil conformation. The interval leucine 78 to proline 107 is disordered. Residues glutamine 80 to valine 91 are compositionally biased toward basic residues. ANK repeat units lie at residues leucine 144–valine 173, leucine 177–alanine 206, isoleucine 210–alanine 239, and glutamate 243–valine 272. Residues arginine 179–arginine 196 form an interaction with TTN region.

In terms of assembly, interacts with titin/TTN and MYPN.

It localises to the nucleus. In terms of biological role, may be involved in the energy metabolism. Could be a molecular link between myofibrillar stretch-induced signaling pathways and muscle gene expression. This is Ankyrin repeat domain-containing protein 23 (Ankrd23) from Mus musculus (Mouse).